Reading from the N-terminus, the 395-residue chain is Pyridinium-3,5-bisthiocarboxylic acid mononucleotide nickel insertion protein (395 aa).

Belongs to the LarC family.

It carries out the reaction Ni(II)-pyridinium-3,5-bisthiocarboxylate mononucleotide = pyridinium-3,5-bisthiocarboxylate mononucleotide + Ni(2+). Functionally, involved in the biosynthesis of a nickel-pincer cofactor ((SCS)Ni(II) pincer complex). Binds Ni(2+), and functions in nickel delivery to pyridinium-3,5-bisthiocarboxylic acid mononucleotide (P2TMN), to form the mature cofactor. Is thus probably required for the activation of nickel-pincer cofactor-dependent enzymes. The sequence is that of Pyridinium-3,5-bisthiocarboxylic acid mononucleotide nickel insertion protein from Staphylococcus epidermidis (strain ATCC 35984 / DSM 28319 / BCRC 17069 / CCUG 31568 / BM 3577 / RP62A).